A 105-amino-acid chain; its full sequence is Integration host factor subunit beta (105 aa).

The protein belongs to the bacterial histone-like protein family. As to quaternary structure, heterodimer of an alpha and a beta chain.

In terms of biological role, this protein is one of the two subunits of integration host factor, a specific DNA-binding protein that functions in genetic recombination as well as in transcriptional and translational control. The protein is Integration host factor subunit beta of Bradyrhizobium sp. (strain ORS 278).